Here is a 348-residue protein sequence, read N- to C-terminus: uncharacterized protein (348 aa).

Its subcellular location is the virion. This is an uncharacterized protein from Acanthamoeba polyphaga mimivirus (APMV).